The sequence spans 419 residues: LanC-like protein 3 homolog (419 aa).

This sequence belongs to the LanC-like protein family.

This is LanC-like protein 3 homolog from Drosophila melanogaster (Fruit fly).